Here is a 124-residue protein sequence, read N- to C-terminus: MKQYKVSAIEVDEEASTVELEEEIDAQLAARLKPGKRVLVDSDQYAFIYILEDEEAFYAIRFEKNVWPALNEAHKLKTSYYVKLNEHTRLALVDMEEELVFLLENIRGNGNYGEAFEQAVNDAF.

The protein belongs to the UPF0738 family.

The polypeptide is UPF0738 protein ABC2521 (Shouchella clausii (strain KSM-K16) (Alkalihalobacillus clausii)).